The primary structure comprises 93 residues: Putative membrane protein insertion efficiency factor (93 aa).

The protein belongs to the UPF0161 family.

Its subcellular location is the cell inner membrane. Functionally, could be involved in insertion of integral membrane proteins into the membrane. This Cupriavidus taiwanensis (strain DSM 17343 / BCRC 17206 / CCUG 44338 / CIP 107171 / LMG 19424 / R1) (Ralstonia taiwanensis (strain LMG 19424)) protein is Putative membrane protein insertion efficiency factor.